The chain runs to 165 residues: Protein NKG7 (165 aa).

Transmembrane regions (helical) follow at residues 9-29 (LLGG…DFWF), 61-81 (FSIM…LSCF), 92-112 (LVST…MAVY), and 133-153 (FYLG…SLGA).

This sequence belongs to the PMP-22/EMP/MP20 family. In terms of tissue distribution, expressed in activated T-cells, in kidney, liver, lung and pancreas. Not expressed in brain, heart, or skeletal muscle. Expressed at high levels in TCR gamma delta-expressing CTL clones, and in some TCR alpha beta-expressing CTL clones (both CD4+ and CD8+), but is not expressed in other TCR alpha beta-expressing CTL clones and in cell lines representing B-cells, monocytes, and myeloid cells.

The protein resides in the cell membrane. Its subcellular location is the cytolytic granule membrane. Its function is as follows. Regulates cytotoxic granule exocytosis in effector lymphocytes, thus acting as a critical mediator of inflammation in a broad range of infectious and non-infectious diseases. Essential for cytotoxic degranulation of natural killer (NK) cells and CD8(+) T-cells and for the activation of CD4(+) T-cells following infection. Plays a critical role in CD8(+) T-cell and NK cell-mediated cytolysis of target cells and contributes to the cytolytic activity via the perforin/granzyme pathway by enhancing exocytosis of LAMP1-carrying lytic granules. Contributes to NK cell-mediated control of cancer metastasis. The protein is Protein NKG7 (NKG7) of Homo sapiens (Human).